Consider the following 336-residue polypeptide: Isopentenyl-diphosphate delta-isomerase (336 aa).

Substrate is bound at residue 5-6; that stretch reads RK. FMN contacts are provided by residues 60–62, Ser-90, and Asn-117; that span reads AMT. Position 147 (Gln-147) interacts with substrate. Glu-148 contributes to the Mg(2+) binding site. Residues Lys-179, Ser-204, Thr-209, 253–255, and 274–275 each bind FMN; these read GVR and SR.

Belongs to the IPP isomerase type 2 family. As to quaternary structure, homooctamer. Dimer of tetramers. FMN is required as a cofactor. NADPH serves as cofactor. Requires Mg(2+) as cofactor.

It localises to the cytoplasm. The enzyme catalyses isopentenyl diphosphate = dimethylallyl diphosphate. Its function is as follows. Involved in the biosynthesis of isoprenoids. Catalyzes the 1,3-allylic rearrangement of the homoallylic substrate isopentenyl (IPP) to its allylic isomer, dimethylallyl diphosphate (DMAPP). This chain is Isopentenyl-diphosphate delta-isomerase, found in Streptococcus pneumoniae serotype 4 (strain ATCC BAA-334 / TIGR4).